Consider the following 510-residue polypeptide: Arginine biosynthesis bifunctional protein ArgJ, chloroplastic (510 aa).

The substrate site is built by threonine 223, lysine 249, glutamate 359, asparagine 505, and threonine 510.

This sequence belongs to the ArgJ family. Heterodimer of an alpha and a beta chain.

It is found in the plastid. The protein localises to the chloroplast. It catalyses the reaction N(2)-acetyl-L-ornithine + L-glutamate = N-acetyl-L-glutamate + L-ornithine. It carries out the reaction L-glutamate + acetyl-CoA = N-acetyl-L-glutamate + CoA + H(+). It functions in the pathway amino-acid biosynthesis; L-arginine biosynthesis; L-ornithine and N-acetyl-L-glutamate from L-glutamate and N(2)-acetyl-L-ornithine (cyclic): step 1/1. It participates in amino-acid biosynthesis; L-arginine biosynthesis; N(2)-acetyl-L-ornithine from L-glutamate: step 1/4. Its function is as follows. Catalyzes two activities which are involved in the cyclic version of arginine biosynthesis: the synthesis of acetylglutamate from glutamate and acetyl-CoA, and of ornithine by transacetylation between acetylornithine and glutamate. The chain is Arginine biosynthesis bifunctional protein ArgJ, chloroplastic from Vitis vinifera (Grape).